A 425-amino-acid polypeptide reads, in one-letter code: G protein-activated inward rectifier potassium channel 2 (425 aa).

At 1-91 (MTMAKLTESM…ILTTLVDLKW (91 aa)) the chain is on the cytoplasmic side. Residues serine 18 and serine 25 each carry the phosphoserine modification. A helical transmembrane segment spans residues 92 to 116 (RFNLLIFVMVYTVTWLFFGMIWWLI). Topologically, residues 117-140 (AYIRGDMDHVEDPSWTPCVTNLNG) are extracellular. Residues 141 to 152 (FVSAFLFSIETE) constitute an intramembrane region (helical; Pore-forming). Residues 153–159 (TTIGYGY) constitute an intramembrane region (pore-forming). The Selectivity filter motif lies at 154–159 (TIGYGY). Residues 160–168 (RVITDKCPE) lie on the Extracellular side of the membrane. A helical transmembrane segment spans residues 169-190 (GIILLLIQSVLGSIVNAFMVGC). At 191–425 (MFVKISQPKK…VANLENESKV (235 aa)) the chain is on the cytoplasmic side. Residues 392-425 (NQHAELETEEEEKNPEEQTERNGDVANLENESKV) are disordered. A PDZ-binding motif is present at residues 422–425 (ESKV).

It belongs to the inward rectifier-type potassium channel (TC 1.A.2.1) family. KCNJ6 subfamily. In terms of assembly, associates with KCNJ3/GIRK1 or KCNJ5/GRIK4 to form a G-protein-activated heteromultimer pore-forming unit. The resulting inward current is much larger. Interacts (via PDZ-binding motif) with SNX27 (via PDZ domain); the interaction is required when endocytosed to prevent degradation in lysosomes and promote recycling to the plasma membrane. In terms of tissue distribution, expressed in insulin-secreting cells and brain.

The protein localises to the membrane. It catalyses the reaction K(+)(in) = K(+)(out). Activated by phosphatidylinositol 4,5 biphosphate (PtdIns(4,5)P2). In terms of biological role, inward rectifier potassium channels are characterized by a greater tendency to allow potassium to flow into the cell rather than out of it. Their voltage dependence is regulated by the concentration of extracellular potassium; as external potassium is raised, the voltage range of the channel opening shifts to more positive voltages. The inward rectification is mainly due to the blockage of outward current by internal magnesium. This potassium channel may be involved in the regulation of insulin secretion by glucose and/or neurotransmitters acting through G-protein-coupled receptors. In Mesocricetus auratus (Golden hamster), this protein is G protein-activated inward rectifier potassium channel 2 (KCNJ6).